We begin with the raw amino-acid sequence, 1165 residues long: Tectonin beta-propeller repeat-containing protein 1 (1165 aa).

TECPR repeat units lie at residues 209–240, 254–285, 301–332, and 344–376; these read LSVWAVSLQGKVWYREDVSHSNPEGSSWSLLD, DLLWATLWEGQALVREGINRSNPKGSSWSIVE, SVVWAVTKDWKVWFRRGINSHNPCGTSWIEMV, and DQVWGIGCEDRAVYFRQGVTPSELSGKTWKAIV. The tract at residues 404–486 is disordered; that stretch reads RGSGESAPSD…GPATTPAELP (83 aa). One can recognise a PH domain in the interval 611–717; that stretch reads KTGALQWWCD…WLALLSLSCC (107 aa). The TECPR 5 repeat unit spans residues 729–756; that stretch reads QAIWSITCKGDIFVSEPSPDLEAHEHPL. A phosphoserine mark is found at S938 and S949. 4 TECPR repeats span residues 953-984, 998-1029, 1044-1075, and 1087-1127; these read IALWAVSDKGDVLCRLGVSELNPAGSSWLHVG, YQVWAVARDGSTFYRGSVYPSQPAGDCWYHIP, TSVYALDENGNLWYRQGITPSYPQGSSWEHVS, and DQVW…DYGI. The interval 1140-1165 is disordered; sequence ATRAPRSSSQEQEPSAPPEAHDPVCC. Residues 1143–1153 are compositionally biased toward low complexity; that stretch reads APRSSSQEQEP.

It belongs to the TECPR1 family. Interacts with ATG5; the interaction is direct. Interacts with WIPI2. Interacts with the ATG5-ATG12 conjugate, the interaction is however mutually exclusive with ATG16, since it does not interact with ATG12-ATG5-ATG16 complex.

It localises to the cytoplasmic vesicle. The protein localises to the autophagosome membrane. Its subcellular location is the lysosome membrane. In terms of biological role, tethering factor involved in autophagy. Involved in autophagosome maturation by promoting the autophagosome fusion with lysosomes: acts by associating with both the ATG5-ATG12 conjugate and phosphatidylinositol-3-phosphate (PtdIns(3)P) present at the surface of autophagosomes. Also involved in selective autophagy against bacterial pathogens, by being required for phagophore/preautophagosomal structure biogenesis and maturation. The chain is Tectonin beta-propeller repeat-containing protein 1 (TECPR1) from Pongo abelii (Sumatran orangutan).